Here is a 370-residue protein sequence, read N- to C-terminus: Protein RecA (370 aa).

A disordered region spans residues Met1–Asp20. An ATP-binding site is contributed by Gly78–Thr85.

Belongs to the RecA family.

The protein resides in the cytoplasm. In terms of biological role, can catalyze the hydrolysis of ATP in the presence of single-stranded DNA, the ATP-dependent uptake of single-stranded DNA by duplex DNA, and the ATP-dependent hybridization of homologous single-stranded DNAs. It interacts with LexA causing its activation and leading to its autocatalytic cleavage. In Prochlorococcus marinus (strain MIT 9515), this protein is Protein RecA.